A 547-amino-acid polypeptide reads, in one-letter code: Riboflavin transporter RibJ (547 aa).

Residues 1–11 (MLPSFTRKPAD) lie on the Cytoplasmic side of the membrane. The helical transmembrane segment at 12-32 (HPIGYLVALSGLLMQLMSYGI) threads the bilayer. Residues 33–58 (DNSYSIFSEDMHNDPSLGFPSITAIS) are Extracellular-facing. A helical transmembrane segment spans residues 59-79 (LGNSVSLGLSPAFGVLAGFCV). At 80–85 (DRLPPR) the chain is on the cytoplasmic side. Residues 86–106 (FMMALSTILLFTGLWISSTLA) traverse the membrane as a helical segment. The Extracellular portion of the chain corresponds to 107–108 (AN). The chain crosses the membrane as a helical span at residues 109-129 (IYVVTFTYCLFASIGTACMLS). Topologically, residues 130–144 (PGAAATSSWFNRYQG) are cytoplasmic. Residues 145–165 (LAMGINFAGGGIGSAIIPPLA) traverse the membrane as a helical segment. The Extracellular segment spans residues 166–175 (GKWVVAYGWR). The chain crosses the membrane as a helical span at residues 176–196 (KAFQLMSIFCAIGVLATALSA). The Cytoplasmic portion of the chain corresponds to 197-344 (RRREPKRDDS…MFTLPFMGNF (148 aa)). The tract at residues 198-293 (RREPKRDDSS…EGLDVTEQSQ (96 aa)) is disordered. Residues 244 to 255 (NEGKEDVREMGR) show a composition bias toward basic and acidic residues. Residues 345–365 (LCWFIYSWAFYSLIYAAVPYI) form a helical membrane-spanning segment. Topologically, residues 366 to 386 (SSMGKPGTVYAGVPPIPTDVA) are extracellular. The chain crosses the membrane as a helical span at residues 387–407 (ATLFTFYGVFQVVGSVLVGWL). The Cytoplasmic segment spans residues 408-412 (ASLVT). Residues 413–433 (AEFAYVFCATVGGIGCGLLAL) form a helical membrane-spanning segment. Residues 434-437 (GRSY) are Extracellular-facing. Residues 438-458 (VAFALLLCIIGFCMAGMFAVM) traverse the membrane as a helical segment. Over 459 to 470 (PTLIATHLYGPN) the chain is Cytoplasmic. A helical transmembrane segment spans residues 471–491 (LGFYFGAVFLAGVVGGFVAPP). Residues 492-505 (MQATIQLRNNGSYA) lie on the Extracellular side of the membrane. An N-linked (GlcNAc...) asparagine glycan is attached at Asn-501. Residues 506–526 (FVCVVMSVSMTLSALVCYATL) traverse the membrane as a helical segment. Residues 527–547 (WRSKRSGIVLAARKTKLVEIM) lie on the Cytoplasmic side of the membrane.

It belongs to the major facilitator superfamily. RibJ family.

The protein resides in the cell membrane. Functionally, transporter involved in riboflavin (vitamin B2) uptake. Also transports FMN and FAD. This Trypanosoma brucei brucei (strain 927/4 GUTat10.1) protein is Riboflavin transporter RibJ.